The primary structure comprises 137 residues: Nucleoside diphosphate kinase (137 aa).

Residues Lys-9, Phe-57, Arg-85, Thr-91, Arg-102, and Asn-112 each contribute to the ATP site. His-115 serves as the catalytic Pros-phosphohistidine intermediate.

It belongs to the NDK family. In terms of assembly, homotetramer. Mg(2+) is required as a cofactor.

The protein localises to the cytoplasm. The enzyme catalyses a 2'-deoxyribonucleoside 5'-diphosphate + ATP = a 2'-deoxyribonucleoside 5'-triphosphate + ADP. It carries out the reaction a ribonucleoside 5'-diphosphate + ATP = a ribonucleoside 5'-triphosphate + ADP. Major role in the synthesis of nucleoside triphosphates other than ATP. The ATP gamma phosphate is transferred to the NDP beta phosphate via a ping-pong mechanism, using a phosphorylated active-site intermediate. This chain is Nucleoside diphosphate kinase, found in Sulfurimonas denitrificans (strain ATCC 33889 / DSM 1251) (Thiomicrospira denitrificans (strain ATCC 33889 / DSM 1251)).